The primary structure comprises 269 residues: Cbp/p300-interacting transactivator 2 (269 aa).

Positions 142 to 200 are disordered; that stretch reads AGHQMNGTNQHFRDCNPKHSGGSSTPGGAGGSGTPGGSGGTSGGAGGSSAGGSGGGSTM. A compositionally biased stretch (gly residues) spans 165 to 198; sequence STPGGAGGSGTPGGSGGTSGGAGGSSAGGSGGGS.

This sequence belongs to the CITED family. In terms of assembly, interacts (via C-terminus) with EP300 (via CH1 domain); the interaction is stimulated in response to hypoxia. Interacts with PPARA. Interacts (via C-terminus) with TFAP2A, TFAP2B and TFAP2C. Interacts (via C-terminus) with SMAD2. Interacts (via C-terminus) with SMAD3 (via MH2 domain). Interacts with LHX2 (via LIM domains). Interacts with WT1 isoform 1 and isoform 3. In terms of tissue distribution, ubiquitous.

Its subcellular location is the nucleus. Transcriptional coactivator of the p300/CBP-mediated transcription complex. Acts as a bridge, linking TFAP2 transcription factors and the p300/CBP transcriptional coactivator complex in order to stimulate TFAP2-mediated transcriptional activation. Positively regulates TGF-beta signaling through its association with the SMAD/p300/CBP-mediated transcriptional coactivator complex. Stimulates the peroxisome proliferator-activated receptors PPARA transcriptional activity. Enhances estrogen-dependent transactivation mediated by estrogen receptors. Also acts as a transcriptional corepressor; interferes with the binding of the transcription factors HIF1A or STAT2 and the p300/CBP transcriptional coactivator complex. Participates in sex determination and early gonad development by stimulating transcription activation of SRY. Plays a role in controlling left-right patterning during embryogenesis; potentiates transcriptional activation of NODAL-mediated gene transcription in the left lateral plate mesoderm (LPM). Plays an essential role in differentiation of the adrenal cortex from the adrenogonadal primordium (AGP); stimulates WT1-mediated transcription activation thereby up-regulating the nuclear hormone receptor NR5A1 promoter activity. Associates with chromatin to the PITX2 P1 promoter region. The sequence is that of Cbp/p300-interacting transactivator 2 (Cited2) from Mus musculus (Mouse).